Here is a 147-residue protein sequence, read N- to C-terminus: Small ribosomal subunit protein bS18 (147 aa).

The protein belongs to the bacterial ribosomal protein bS18 family. As to quaternary structure, part of the 30S ribosomal subunit. Forms a tight heterodimer with protein bS6.

Binds as a heterodimer with protein bS6 to the central domain of the 16S rRNA, where it helps stabilize the platform of the 30S subunit. The sequence is that of Small ribosomal subunit protein bS18 from Dehalococcoides mccartyi (strain ATCC BAA-2100 / JCM 16839 / KCTC 5957 / BAV1).